We begin with the raw amino-acid sequence, 433 residues long: MLGAVKMEGHEDWSSYYGEPEAYSSVGNMNAGLSMNPMNTYMSMSAMSTSANMTASSMNMSYVNTGMSPSITGMSPGTGAMPGMGNGVASMASHLSPSMSPMSAQATSMNALAPYTNINSMSPIYGQSNINRSRDPKTYRRSYTHAKPPYSYISLITMAIQQSPSKMLTLSEVYQWIMDLFPFYRQNQQRWQNSIRHSLSFNDCFLKVPRSPDKPGKGSFWTLHPDSGNMFENGCYLRRQKRFKCDKKPSLREGGGKKLSEGASSVGSVGNSSSERSVGNESPHSSSSPCQEQKRSLVDMKSSHGLSPEHATSPASQAQHLLSQHHSVLSHEAQSHLKPEHHYSFNHPFSINNLMSSEQQHHHHHHHHNHQHHHKMDLKAYEQVMHYSGYGSPMAGSLAMSTVTNKSGLEPSPISSDTSYYQGGYSRPIMNSS.

Residues 147–241 constitute a DNA-binding region (fork-head); that stretch reads KPPYSYISLI…ENGCYLRRQK (95 aa). The segment covering 247-260 has biased composition (basic and acidic residues); sequence KKPSLREGGGKKLS. Disordered stretches follow at residues 247–337 and 407–433; these read KKPS…QSHL and SGLE…MNSS. Low complexity predominate over residues 261-282; sequence EGASSVGSVGNSSSERSVGNES. The span at 292–302 shows a compositional bias: basic and acidic residues; it reads EQKRSLVDMKS. The segment covering 315–331 has biased composition (low complexity); that stretch reads ASQAQHLLSQHHSVLSH. Polar residues predominate over residues 407–421; it reads SGLEPSPISSDTSYY.

It is found in the nucleus. Functionally, acts as a transcriptional activator during early development, limiting the extent of mesoderm formation in the gastrula. Binds to DNA via the target sequence 5'-GT[AC]AACA-3', with 5'-GTAAACA-3' being the preferred binding site. This Xenopus laevis (African clawed frog) protein is Forkhead box protein A2-B (foxa2-b).